Here is a 534-residue protein sequence, read N- to C-terminus: Fimbrial subunit type 2 (534 aa).

Residues 1 to 32 (MKYNTSTLGRRAAAAAGVLTLAVLGLAPMAQA) form the signal peptide. Disordered regions lie at residues 56–76 (GDGN…GKGA) and 329–376 (TYAE…DKDG). A compositionally biased stretch (pro residues) spans 334–347 (PPAPETPPANPDNP). Residues 361–376 (TIKKVDGNDRSGDKDG) are compositionally biased toward basic and acidic residues. The LPXTG sorting signal motif lies at 492-496 (LPLTG). Thr-495 carries the pentaglycyl murein peptidoglycan amidated threonine modification. Residues 496–534 (GANGMLILTASGAALLMIAVGSVLVARYRERKRNRDLAA) constitute a propeptide, removed by sortase.

The protein localises to the secreted. The protein resides in the cell wall. Its subcellular location is the fimbrium. Its function is as follows. Major fimbrial subunit of A.naeslundii. The protein is Fimbrial subunit type 2 of Actinomyces naeslundii.